Here is a 542-residue protein sequence, read N- to C-terminus: Protein MGF 505-11L (542 aa).

This sequence belongs to the asfivirus MGF 505 family.

Plays a role in virus cell tropism, and may be required for efficient virus replication in macrophages. The chain is Protein MGF 505-11L from African swine fever virus (isolate Pig/Kenya/KEN-50/1950) (ASFV).